The sequence spans 239 residues: MNKNIIIKSIAALTILTSITGVGTTVVDGIQQTAKAENTVKQITNTNVAPYSGVTWMGAGTGFVVGNHTIITNKHVTYHMKVGDEIKAHPNGFYNNGGGLYKVTKIVDYPGKEDIAVVQVEEKSTQPKGRKFKDFTSKFNIASEAKENEPISVIGYPNPNGNKLQMYESTGKVLSVNGNIVSSDAIIQPGSSGSPILNSKHEAIGVIYAGNKPSGESTRGFAVYFSPEIKKFIADNLDK.

A signal peptide spans 1–36 (MNKNIIIKSIAALTILTSITGVGTTVVDGIQQTAKA). Residues H75, D114, and S192 each act as charge relay system in the active site.

Belongs to the peptidase S1B family.

It is found in the secreted. This Staphylococcus aureus (strain MSSA476) protein is Serine protease SplF (splF).